We begin with the raw amino-acid sequence, 193 residues long: MIKPLKSSRTGLLAGVFDPVHIGHLFMAHLAMEAANLDRVWFVPTHIPPHKDSAKVPYFHRVNMLEMALKEEPKFVLMELEREARPTYSYETILSVKHVLGEKPYFILGSDEWEELHNWRRYDLLVKNAIFIVVPRKPITVARPEAEAIFTDMTPINVSSTYIRQRVAKGKPITYLVPKTVETYIHENHLYYP.

Belongs to the NadD family.

It catalyses the reaction nicotinate beta-D-ribonucleotide + ATP + H(+) = deamido-NAD(+) + diphosphate. The protein operates within cofactor biosynthesis; NAD(+) biosynthesis; deamido-NAD(+) from nicotinate D-ribonucleotide: step 1/1. Functionally, catalyzes the reversible adenylation of nicotinate mononucleotide (NaMN) to nicotinic acid adenine dinucleotide (NaAD). The sequence is that of Probable nicotinate-nucleotide adenylyltransferase from Coprothermobacter proteolyticus (strain ATCC 35245 / DSM 5265 / OCM 4 / BT).